Consider the following 108-residue polypeptide: Glutaredoxin 4 (108 aa).

The 103-residue stretch at 5–107 (IKKIQNQIQN…KTISICDKLN (103 aa)) folds into the Glutaredoxin domain. Lys22 contacts glutathione. Residue Cys30 coordinates [2Fe-2S] cluster. Residues Arg59, Phe71, and 84–85 (CN) contribute to the glutathione site.

It belongs to the glutaredoxin family. Monothiol subfamily. In terms of assembly, homodimer.

The protein resides in the cytoplasm. Monothiol glutaredoxin involved in the biogenesis of iron-sulfur clusters. This Buchnera aphidicola subsp. Baizongia pistaciae (strain Bp) protein is Glutaredoxin 4 (grxD).